We begin with the raw amino-acid sequence, 471 residues long: Putative multidrug resistance protein MdtD (471 aa).

Topologically, residues 1-11 (MTDLPDSTRWQ) are periplasmic. The helical transmembrane segment at 12–32 (LWIVAFGFFMQSLDTTIVNTA) threads the bilayer. The Cytoplasmic segment spans residues 33–48 (LPSMAQSLGESPLHMH). A helical transmembrane segment spans residues 49–69 (MVIVSYVLTVAVMLPASGWLA). Residues 70-76 (DKVGVRN) lie on the Periplasmic side of the membrane. A helical membrane pass occupies residues 77 to 97 (IFFTAIVLFTLGSLFCALSGT). Topologically, residues 98–101 (LNEL) are cytoplasmic. A helical transmembrane segment spans residues 102-124 (LLARALQGVGGAMMVPVGRLTVM). Residues 125–137 (KIVPREQYMAAMT) are Periplasmic-facing. The helical transmembrane segment at 138-158 (FVTLPGQVGPLLGPALGGLLV) threads the bilayer. Over 159–164 (EYASWH) the chain is Cytoplasmic. The chain crosses the membrane as a helical span at residues 165-185 (WIFLINIPVGIIGAIATLMLM). The Periplasmic segment spans residues 186–196 (PNYTMQTRRFD). A helical transmembrane segment spans residues 197–217 (LSGFLLLAVGMAVLTLALDGS). The Cytoplasmic segment spans residues 218-224 (KGTGLSP). A helical transmembrane segment spans residues 225 to 245 (LAIAGLVAVGVVALVLYLLHA). Residues 246–262 (RNNNRALFSLKLFRTRT) are Periplasmic-facing. A helical transmembrane segment spans residues 263-283 (FSLGLAGSFAGRIGSGMLPFM). At 284-285 (TP) the chain is on the cytoplasmic side. Residues 286–306 (VFLQIGLGFSPFHAGLMMIPM) form a helical membrane-spanning segment. Residues 307–341 (VLGSMGMKRIVVQVVNRFGYRRVLVATTLGLSLVT) are Periplasmic-facing. The helical transmembrane segment at 342–362 (LLFMTTALLGWYYVLPFVLFL) threads the bilayer. Residues 363-395 (QGMVNSTRFSSMNTLTLKDLPDNLASSGNSLLS) lie on the Cytoplasmic side of the membrane. A helical transmembrane segment spans residues 396–416 (MIMQLSMSIGVTIAGLLLGLF). Residues 417-430 (GSQHISVDSGTTQT) lie on the Periplasmic side of the membrane. Residues 431 to 451 (VFMYTWLSMAFIIALPAFIFA) form a helical membrane-spanning segment. Residues 452–471 (RVPNDTHQNVAISRRKRSAQ) are Cytoplasmic-facing.

It belongs to the major facilitator superfamily. TCR/Tet family.

Its subcellular location is the cell inner membrane. The protein is Putative multidrug resistance protein MdtD of Shigella flexneri.